A 419-amino-acid chain; its full sequence is Serine hydroxymethyltransferase (419 aa).

(6S)-5,6,7,8-tetrahydrofolate is bound by residues Leu121 and 125 to 127 (GHL). At Lys229 the chain carries N6-(pyridoxal phosphate)lysine. 354 to 356 (SPF) serves as a coordination point for (6S)-5,6,7,8-tetrahydrofolate.

The protein belongs to the SHMT family. Homodimer. The cofactor is pyridoxal 5'-phosphate.

The protein localises to the cytoplasm. The enzyme catalyses (6R)-5,10-methylene-5,6,7,8-tetrahydrofolate + glycine + H2O = (6S)-5,6,7,8-tetrahydrofolate + L-serine. It participates in one-carbon metabolism; tetrahydrofolate interconversion. The protein operates within amino-acid biosynthesis; glycine biosynthesis; glycine from L-serine: step 1/1. Functionally, catalyzes the reversible interconversion of serine and glycine with tetrahydrofolate (THF) serving as the one-carbon carrier. This reaction serves as the major source of one-carbon groups required for the biosynthesis of purines, thymidylate, methionine, and other important biomolecules. Also exhibits THF-independent aldolase activity toward beta-hydroxyamino acids, producing glycine and aldehydes, via a retro-aldol mechanism. The protein is Serine hydroxymethyltransferase of Coxiella burnetii (strain CbuG_Q212) (Coxiella burnetii (strain Q212)).